The sequence spans 370 residues: Actin-related protein 2/3 complex subunit 1A-B (370 aa).

6 WD repeats span residues 6–45 (FLLE…WVKC), 50–89 (EHNG…WKPT), 140–179 (PIRS…VDEK), 202–241 (SSGG…SVSQ), 244–284 (TEFL…TFVS), and 322–365 (LHQN…SYIQ).

Belongs to the WD repeat ARPC1 family. Component of the Arp2/3 complex.

It localises to the cytoplasm. Its subcellular location is the cytoskeleton. The protein resides in the nucleus. In terms of biological role, probably functions as a component of the Arp2/3 complex which is involved in regulation of actin polymerization and together with an activating nucleation-promoting factor (NPF) mediates the formation of branched actin networks. In addition to its role in the cytoplasmic cytoskeleton, the Arp2/3 complex also promotes actin polymerization in the nucleus, thereby regulating gene transcription and repair of damaged DNA. This chain is Actin-related protein 2/3 complex subunit 1A-B (arpc1a-b), found in Xenopus laevis (African clawed frog).